Here is a 226-residue protein sequence, read N- to C-terminus: Protein Thf1 (226 aa).

The stretch at 183–213 forms a coiled coil; sequence EEKMQKDLDLYRSNLEKMDQLLTVIEEALQA.

Belongs to the THF1 family.

Its function is as follows. May be involved in photosynthetic membrane biogenesis. The chain is Protein Thf1 from Gloeothece citriformis (strain PCC 7424) (Cyanothece sp. (strain PCC 7424)).